Consider the following 973-residue polypeptide: E3 ubiquitin-protein ligase MIB2 (973 aa).

In terms of domain architecture, MIB/HERC2 1 spans 1–80 (MDLDPHAGVQ…AHDLLLYDNA (80 aa)). Residues 86-138 (HPNIICDCCKKHGLRGMRWKCRVCFDYDLCTQCYMHNKHDLTHAFERYETSHS) form a ZZ-type zinc finger. Zn(2+) contacts are provided by Cys91, Cys94, Cys106, Cys109, Cys115, Cys118, His124, and His128. In terms of domain architecture, MIB/HERC2 2 spans 149–227 (LPRIPLRGIF…KVDLRCVGEA (79 aa)). The residue at position 251 (Ser251) is a Phosphoserine. 9 ANK repeats span residues 480–509 (QGRT…SMDL), 513–542 (EGNT…AVDA), 546–575 (TRST…DVNL), 579–611 (HADT…DVTA), 615–644 (QGFT…QLVD), 649–679 (DGFT…DVNV), 683–712 (KLQS…SVNT), 716–744 (EGDT…DPGP), and 785–814 (RGRS…ERQA). RING-type zinc fingers lie at residues 850–885 (CLVC…IRCQ) and 929–962 (CPIC…PICR).

Interacts with actin monomer. In terms of processing, ubiquitinated. Possibly via autoubiquitination. Highly expressed in brain, heart, liver and kidney.

The protein localises to the cytoplasm. It is found in the endosome. It carries out the reaction S-ubiquitinyl-[E2 ubiquitin-conjugating enzyme]-L-cysteine + [acceptor protein]-L-lysine = [E2 ubiquitin-conjugating enzyme]-L-cysteine + N(6)-ubiquitinyl-[acceptor protein]-L-lysine.. Its pathway is protein modification; protein ubiquitination. E3 ubiquitin-protein ligase that mediates ubiquitination of Delta receptors, which act as ligands of Notch proteins. Positively regulates the Delta-mediated Notch signaling by ubiquitinating the intracellular domain of Delta, leading to endocytosis of Delta receptors. The chain is E3 ubiquitin-protein ligase MIB2 (Mib2) from Mus musculus (Mouse).